Reading from the N-terminus, the 238-residue chain is Survival of motor neuron-related-splicing factor 30 (238 aa).

The Tudor domain maps to Ser72–Lys132. The Nuclear localization signal signature appears at Lys142 to Lys160.

Belongs to the SMN family. Associates with spliceosomes.

The protein localises to the nucleus speckle. The protein resides in the nucleus. It is found in the cajal body. Its function is as follows. Involved in spliceosome assembly. This is Survival of motor neuron-related-splicing factor 30 (smndc1) from Xenopus tropicalis (Western clawed frog).